The following is a 219-amino-acid chain: Chalcone--flavanone isomerase (219 aa).

Substrate is bound by residues threonine 50, asparagine 115, and serine 192.

Belongs to the chalcone isomerase family.

The catalysed reaction is a chalcone = a flavanone.. It participates in secondary metabolite biosynthesis; flavonoid biosynthesis. Its function is as follows. Catalyzes the intramolecular cyclization of bicyclic chalcones into tricyclic (S)-flavanones. Responsible for the isomerization of 4,2',4',6'-tetrahydroxychalcone (also termed chalcone) into naringenin. The chain is Chalcone--flavanone isomerase (CHI) from Pyrus communis (Pear).